We begin with the raw amino-acid sequence, 265 residues long: Short-chain dehydrogenase/reductase phqE (265 aa).

T23, S24, I26, S46, N47, K50, D76, R131, V203, and T205 together coordinate NADP(+). The helical transmembrane segment at G25 to G45 threads the bilayer.

This sequence belongs to the short-chain dehydrogenases/reductases (SDR) family. It depends on NADP(+) as a cofactor.

It localises to the membrane. It functions in the pathway alkaloid biosynthesis. In terms of biological role, short-chain dehydrogenase/reductase; part of the gene cluster that mediates the biosynthesis of paraherquamide, a fungal indole alkaloid that belongs to a family of natural products containing a characteristic bicyclo[2.2.2]diazaoctane core. The first steps in the biosynthesis of paraherquamide is the production of the beta-methyl-proline precursor from L-isoleucine. They require oxidation of a terminally hydroxylated L-isoleucine to the corresponding aldehyde by enzymes which have still to be identified. Spontaneous cyclization and dehydration would yield the 4-methyl pyrolline-5-carboxylic acid, which is then reduced by the pyrroline-5-carboxylate reductase phqD leading to the beta-methyl-proline precursor. The next step of paraherquamide biosynthesis involves coupling of beta-methyl-proline and L-tryptophan by the bimodular NRPS phqB, to produce a monooxopiperazine intermediate. The reductase (R) domain of phqB utilizes NADPH for hydride transfer to reduce the thioester bond of the T domain-tethered linear dipeptide to a hemithioaminal intermediate, which spontaneously cleaves the C-S bond to release the aldehyde product. This compound undergoes spontaneous cyclization and dehydration to give a dienamine which is reverse prenylated at C-2 by the reverse prenyltransferase phqJ. The other prenyltransferase present in the cluster, phqI may be a redundant gene in the pathway. During biosynthetic assembly, the key step to produce the polycyclic core is catalyzed by the bifunctional reductase and intramolecular [4+2] Diels-Alderase, phqE, resulting in formation of the [2.2.2] diazaoctane intermediate preparaherquamide. Following formation of preparaherquamide, an indole 2,3-epoxidation-initiated pinacol-like rearrangement is catalyzed by the phqK FAD-dependent monooxygenase. The prenyltransferase phqA, the cytochrome P450 monooxygenase phqL, and the FAD-linked oxidoreductase phqH (or the cytochrome P450 monooxygenase phqM), are proposed to be involved in the formation of the pyran ring. The FAD-dependent monooxygenase phqK is likely responsible for generation of the spiro-oxindole, and the N-methylation is likely mediated by the phqN methyltransferase leading to the isolable natural product paraherquamide F. However, the order of these biosynthetic steps has still to be determined. In late-stage paraherquamide biosynthesis, the third P450 monooxygenase, phqO, is probably responsible for the C-14 hydroxylation, transforming paraherquamide F to paraherquamide G, and paraherquamide E to the final product paraherquamide A. The expansion from the 6-membered ring pyran (in paraherquamides F and G) to the 7-membered dioxepin ring (in paraherquamides A and E) represents a poorly understood but intriguing process that probably involves the 2-oxoglutarate-dependent dioxygenase phqC. Finally, the remaining members of the paraherquamide cluster, including phqI as well as phqM (or phqH), do not have a clearly prescribed role and appear to be redundant. The protein is Short-chain dehydrogenase/reductase phqE of Penicillium fellutanum.